Consider the following 57-residue polypeptide: uncharacterized protein (57 aa).

Positions 34-57 are disordered; that stretch reads QGKRGETEGQIEISRKAGHPAPAF.

This is an uncharacterized protein from Saccharomyces cerevisiae (strain ATCC 204508 / S288c) (Baker's yeast).